A 268-amino-acid chain; its full sequence is GTP cyclohydrolase FolE2 (268 aa).

It belongs to the GTP cyclohydrolase IV family.

It catalyses the reaction GTP + H2O = 7,8-dihydroneopterin 3'-triphosphate + formate + H(+). The protein operates within cofactor biosynthesis; 7,8-dihydroneopterin triphosphate biosynthesis; 7,8-dihydroneopterin triphosphate from GTP: step 1/1. Functionally, converts GTP to 7,8-dihydroneopterin triphosphate. This chain is GTP cyclohydrolase FolE2, found in Ralstonia nicotianae (strain ATCC BAA-1114 / GMI1000) (Ralstonia solanacearum).